Reading from the N-terminus, the 315-residue chain is Acetyl-coenzyme A carboxylase carboxyl transferase subunit alpha (315 aa).

A CoA carboxyltransferase C-terminal domain is found at 39–292; sequence LEDKSAKLLR…GDALEQELNG (254 aa).

Belongs to the AccA family. In terms of assembly, acetyl-CoA carboxylase is a heterohexamer composed of biotin carboxyl carrier protein (AccB), biotin carboxylase (AccC) and two subunits each of ACCase subunit alpha (AccA) and ACCase subunit beta (AccD).

The protein localises to the cytoplasm. The catalysed reaction is N(6)-carboxybiotinyl-L-lysyl-[protein] + acetyl-CoA = N(6)-biotinyl-L-lysyl-[protein] + malonyl-CoA. It participates in lipid metabolism; malonyl-CoA biosynthesis; malonyl-CoA from acetyl-CoA: step 1/1. Functionally, component of the acetyl coenzyme A carboxylase (ACC) complex. First, biotin carboxylase catalyzes the carboxylation of biotin on its carrier protein (BCCP) and then the CO(2) group is transferred by the carboxyltransferase to acetyl-CoA to form malonyl-CoA. This chain is Acetyl-coenzyme A carboxylase carboxyl transferase subunit alpha, found in Sphingopyxis alaskensis (strain DSM 13593 / LMG 18877 / RB2256) (Sphingomonas alaskensis).